Here is a 108-residue protein sequence, read N- to C-terminus: Precursor of CEP16 (108 aa).

Positions 1–27 are cleaved as a signal peptide; that stretch reads MVMAKNLTKFYVVFLVVLMMVVSLLLA. A propeptide spanning residues 28-92 is cleaved from the precursor; it reads IEGRPVKDSS…VGHHRAKGYK (65 aa). 2 N-linked (GlcNAc...) asparagine glycosylation sites follow: Asn50 and Asn98. A disordered region spans residues 76–108; the sequence is QSGPSPGVGHHRAKGYKMFGRANDSGPSPGVGH. Residues Pro102 and Pro104 each carry the hydroxyproline modification.

The protein belongs to the C-terminally encoded plant signaling peptide (CEP) family. In terms of assembly, interacts with CEP receptors (e.g. CEPR1 and CEPR2). Post-translationally, the mature small signaling peptide is generated by proteolytic processing of the longer precursor.

It is found in the secreted. The protein resides in the extracellular space. It localises to the apoplast. Extracellular signaling peptide that may regulate primary root growth rate and systemic nitrogen (N)-demand signaling. The chain is Precursor of CEP16 from Arabidopsis thaliana (Mouse-ear cress).